Consider the following 73-residue polypeptide: DNA-directed RNA polymerase subunit omega (73 aa).

Belongs to the RNA polymerase subunit omega family. In terms of assembly, the RNAP catalytic core consists of 2 alpha, 1 beta, 1 beta' and 1 omega subunit. When a sigma factor is associated with the core the holoenzyme is formed, which can initiate transcription.

It catalyses the reaction RNA(n) + a ribonucleoside 5'-triphosphate = RNA(n+1) + diphosphate. Functionally, promotes RNA polymerase assembly. Latches the N- and C-terminal regions of the beta' subunit thereby facilitating its interaction with the beta and alpha subunits. This Clostridium novyi (strain NT) protein is DNA-directed RNA polymerase subunit omega.